The sequence spans 137 residues: NADPH-dependent 7-cyano-7-deazaguanine reductase (137 aa).

The active-site Thioimide intermediate is the cysteine 45. Catalysis depends on aspartate 52, which acts as the Proton donor. Substrate-binding positions include 68-70 (VEL) and 87-88 (QE).

It belongs to the GTP cyclohydrolase I family. QueF type 1 subfamily.

The protein localises to the cytoplasm. The catalysed reaction is 7-aminomethyl-7-carbaguanine + 2 NADP(+) = 7-cyano-7-deazaguanine + 2 NADPH + 3 H(+). Its pathway is tRNA modification; tRNA-queuosine biosynthesis. In terms of biological role, catalyzes the NADPH-dependent reduction of 7-cyano-7-deazaguanine (preQ0) to 7-aminomethyl-7-deazaguanine (preQ1). The sequence is that of NADPH-dependent 7-cyano-7-deazaguanine reductase from Thermotoga petrophila (strain ATCC BAA-488 / DSM 13995 / JCM 10881 / RKU-1).